Here is a 72-residue protein sequence, read N- to C-terminus: Conotoxin VnMKLT2-0221 (72 aa).

The signal sequence occupies residues 1–22 (MKLTCVLIVAVLFLTACQLTTA). The propeptide occupies 23-45 (ASYARSERQHPDLGSSDQNSKLT). A disordered region spans residues 26-45 (ARSERQHPDLGSSDQNSKLT). 3 cysteine pairs are disulfide-bonded: Cys48–Cys62, Cys55–Cys66, and Cys61–Cys71.

This sequence belongs to the conotoxin O1 superfamily. As to expression, expressed by the venom duct.

The protein localises to the secreted. The polypeptide is Conotoxin VnMKLT2-0221 (Conus ventricosus (Mediterranean cone)).